A 645-amino-acid polypeptide reads, in one-letter code: UPF0313 protein CLK_3381 (645 aa).

The Radical SAM core domain maps to 295-566 (AIKEVKFSIT…RMQRALLQFS (272 aa)). The [4Fe-4S] cluster site is built by C309, C313, and C316. The segment at 598–645 (NKPYKKSHKKNNVKNNNNHYNKNNNYNKNKDVSKKNKKNSLSKHKKRK) is disordered. A compositionally biased stretch (basic residues) spans 600–609 (PYKKSHKKNN). Residues 610 to 624 (VKNNNNHYNKNNNYN) show a composition bias toward low complexity. The span at 632-645 (KNKKNSLSKHKKRK) shows a compositional bias: basic residues.

It belongs to the UPF0313 family. It depends on [4Fe-4S] cluster as a cofactor.

The sequence is that of UPF0313 protein CLK_3381 from Clostridium botulinum (strain Loch Maree / Type A3).